A 279-amino-acid chain; its full sequence is Putative biopolymer transport protein ExbB homolog (279 aa).

The next 3 helical transmembrane spans lie at 19–39, 126–146, and 162–182; these read SGGVITYLIAAIGIYGFITAL, IIEVAPMLGLIGTVIGIWYTF, and IYVALITTILGLAVAIILMPL.

Belongs to the ExbB/TolQ family.

The protein localises to the cell membrane. The protein is Putative biopolymer transport protein ExbB homolog of Methanothermobacter thermautotrophicus (strain ATCC 29096 / DSM 1053 / JCM 10044 / NBRC 100330 / Delta H) (Methanobacterium thermoautotrophicum).